A 493-amino-acid chain; its full sequence is 3-octaprenyl-4-hydroxybenzoate carboxy-lyase (493 aa).

Asn172 is a Mn(2+) binding site. Prenylated FMN-binding positions include 175-177, 189-191, and 194-195; these read IYR, RWL, and RG. Glu238 is a Mn(2+) binding site. Asp287 acts as the Proton donor in catalysis.

Belongs to the UbiD family. Homohexamer. The cofactor is prenylated FMN. Mn(2+) is required as a cofactor.

It localises to the cell membrane. It catalyses the reaction a 4-hydroxy-3-(all-trans-polyprenyl)benzoate + H(+) = a 2-(all-trans-polyprenyl)phenol + CO2. It participates in cofactor biosynthesis; ubiquinone biosynthesis. Its function is as follows. Catalyzes the decarboxylation of 3-octaprenyl-4-hydroxy benzoate to 2-octaprenylphenol, an intermediate step in ubiquinone biosynthesis. This Cellvibrio japonicus (strain Ueda107) (Pseudomonas fluorescens subsp. cellulosa) protein is 3-octaprenyl-4-hydroxybenzoate carboxy-lyase.